Consider the following 110-residue polypeptide: UPF0060 membrane protein RSp1275 (110 aa).

Transmembrane regions (helical) follow at residues 8–28, 33–53, 63–83, and 90–110; these read FLFA…WLVL, SAWL…LLTL, AAYG…VDGA, and IGGA…PQPT.

It belongs to the UPF0060 family.

It localises to the cell inner membrane. This chain is UPF0060 membrane protein RSp1275, found in Ralstonia nicotianae (strain ATCC BAA-1114 / GMI1000) (Ralstonia solanacearum).